The following is a 388-amino-acid chain: P2X purinoceptor 4 (388 aa).

The Cytoplasmic segment spans residues 1-33; sequence MTGCCTVLGAFLFEYDTPRIVLIRSRKVGLMNR. Residues 34–54 form a helical membrane-spanning segment; sequence TVQLLILAYVIGWVFVWEKGY. Residues 55-338 are Extracellular-facing; sequence QETDSVVSSV…KFDIIPTMIN (284 aa). Residues lysine 67 and lysine 69 each contribute to the ATP site. Lysine 67 and lysine 69 together coordinate CTP. N-linked (GlcNAc...) asparagine glycosylation is found at asparagine 75, asparagine 110, asparagine 131, asparagine 153, and asparagine 184. 3 disulfide bridges follow: cysteine 116–cysteine 165, cysteine 126–cysteine 149, and cysteine 132–cysteine 159. Threonine 186 and leucine 188 together coordinate ATP. Threonine 186 serves as a coordination point for CTP. Residues asparagine 199 and asparagine 208 are each glycosylated (N-linked (GlcNAc...) asparagine). Intrachain disulfides connect cysteine 217/cysteine 227 and cysteine 261/cysteine 270. 3 residues coordinate ATP: asparagine 293, arginine 295, and lysine 313. CTP is bound by residues asparagine 293, arginine 295, and lysine 313. Residues 339–359 form a helical membrane-spanning segment; that stretch reads IGSGLALLGVATVLCDVIVLY. At 360–388 the chain is on the cytoplasmic side; that stretch reads CMKKRYYYREKKYKYVEDYEQGLGNQMEQ.

The protein belongs to the P2X receptor family. Functional P2RXs are organized as homomeric and heteromeric trimers. Forms heterotrimer with P2RX1. Interacts with P2RX7 (via C-terminus); this interaction is functional only in the presence of ATP. Forms heterotrimer with P2RX4; functional differences between homomeric P2RX4 and P2RX4/6 heterotrimer are minor. Interacts with AP1M2.

It is found in the cell membrane. It localises to the lysosome membrane. The enzyme catalyses K(+)(in) = K(+)(out). It catalyses the reaction Na(+)(in) = Na(+)(out). The catalysed reaction is Ca(2+)(in) = Ca(2+)(out). Activated by ATP. pH-dependent and inhibited by acidic pH. Its function is as follows. ATP-gated nonselective transmembrane cation channel permeable to potassium, sodium and calcium. CTP, but not GTP or UTP, functions as a weak affinity agonist for P2RX4. Activated by extracellularly released ATP, it plays multiple role in immunity and central nervous system physiology. Could also function as an ATP-gated cation channel of lysosomal membranes. The polypeptide is P2X purinoceptor 4 (P2RX4) (Bos taurus (Bovine)).